The sequence spans 141 residues: Superoxide dismutase [Cu-Zn], chloroplastic (141 aa).

Cu cation contacts are provided by His-33, His-35, and His-50. A disulfide bridge links Cys-44 with Cys-133. Zn(2+) is bound by residues His-50, His-58, His-67, and Asp-70. Residue His-107 participates in Cu cation binding.

It belongs to the Cu-Zn superoxide dismutase family. As to quaternary structure, homotetramer. The cofactor is Cu cation. Zn(2+) is required as a cofactor.

Its subcellular location is the plastid. It is found in the chloroplast. The catalysed reaction is 2 superoxide + 2 H(+) = H2O2 + O2. Functionally, destroys radicals which are normally produced within the cells and which are toxic to biological systems. The polypeptide is Superoxide dismutase [Cu-Zn], chloroplastic (SODCP) (Pinus sylvestris (Scotch pine)).